A 257-amino-acid chain; its full sequence is Acetylglutamate kinase (257 aa).

Substrate is bound by residues 41–42 (GG), arginine 63, and asparagine 158.

It belongs to the acetylglutamate kinase family. ArgB subfamily.

The protein localises to the cytoplasm. It catalyses the reaction N-acetyl-L-glutamate + ATP = N-acetyl-L-glutamyl 5-phosphate + ADP. The protein operates within amino-acid biosynthesis; L-arginine biosynthesis; N(2)-acetyl-L-ornithine from L-glutamate: step 2/4. In terms of biological role, catalyzes the ATP-dependent phosphorylation of N-acetyl-L-glutamate. The chain is Acetylglutamate kinase from Phocaeicola vulgatus (strain ATCC 8482 / DSM 1447 / JCM 5826 / CCUG 4940 / NBRC 14291 / NCTC 11154) (Bacteroides vulgatus).